A 344-amino-acid chain; its full sequence is KRR1 small subunit processome component homolog (344 aa).

A KH domain is found at 125–193 (DIIKIGNLVH…VRDIVLETMN (69 aa)). Basic residues predominate over residues 232 to 245 (NISKRKQPKVKKQK). Disordered stretches follow at residues 232-260 (NISK…ESKV) and 273-326 (QEQK…TKVD). Residues 270–295 (FLNQEQKQAKRNQGRTEKQKEAAKRQ) adopt a coiled-coil conformation. Basic and acidic residues-rich tracts occupy residues 283–302 (GRTE…RNKD) and 315–326 (RKKEDGSSTKVD).

This sequence belongs to the KRR1 family. As to quaternary structure, monomer. Component of the ribosomal small subunit (SSU) processome.

The protein localises to the nucleus. It localises to the nucleolus. Functionally, required for 40S ribosome biogenesis. Involved in nucleolar processing of pre-18S ribosomal RNA and ribosome assembly. Binds to RNA. Required for female germline development, cell viability during eye development and for survival of dividing cells and epithelial cells during early wing disk development. The chain is KRR1 small subunit processome component homolog from Drosophila yakuba (Fruit fly).